Consider the following 467-residue polypeptide: MLMSWSPEECKGQGEPLDDRHPLCARLVEKPSRGSEEHLKSGPGPIVTRTASGPALAFWQAVLAGDVGCVSRILADSSTGLAPDSVFDTSDPERWRDFRFNIRALRLWSLTYEEELTTPLHVAASRGHTEVLRLLLRRRARPDSAPGGRTALHEACAAGHTACVHVLLVAGADPNIADQDGKRPLHLCRGPGTLECAELLLRFGARVDGRSEEEEETPLHVAARLGHVELADLLLRRGACPDARNAEGWTPLLAACDVRCQSITDAEATTARCLQLCSLLLSAGADADAADQDKQRPLHLACRRGHAAVVELLLSCGVSANTMDYGGHTPLHCALQGPAAALAQSPEHVVRALLNHGAVRVWPGALPKVLERWSTCPRTIEVLMNTYSVVQLPEEAVGLVTPETLQKHQRFYSSLFALVRQPRSLQHLSRCALRSHLEGSLPQALPRLPLPPRLLRYLQLDFEGVLY.

7 ANK repeats span residues 115 to 144 (ELTTPLHVAASRGHTEVLRLLLRRRARPDS), 147 to 176 (GGRTALHEACAAGHTACVHVLLVAGADPNI), 180 to 209 (DGKRPLHLCRGPGTLECAELLLRFGARVDG), 214 to 243 (EEETPLHVAARLGHVELADLLLRRGACPDA), 247 to 289 (EGWT…DADA), 293 to 322 (DKQRPLHLACRRGHAAVVELLLSCGVSANT), and 326 to 361 (GGHTPLHCALQGPAAALAQSPEHVVRALLNHGAVRV). The SOCS box domain occupies 412 to 464 (YSSLFALVRQPRSLQHLSRCALRSHLEGSLPQALPRLPLPPRLLRYLQLDFEG).

This sequence belongs to the ankyrin SOCS box (ASB) family. In terms of tissue distribution, expressed in the eye. The highest expression is observed in the iris, with moderate levels in the trabecular meshwork (TM), the lamina, and the optic nerve; slightly lower levels in the ciliary body, retina, and choroid; and very low levels in the lens.

Its subcellular location is the cytoplasm. It localises to the nucleus. It participates in protein modification; protein ubiquitination. May be a substrate-recognition component of a SCF-like ECS (Elongin-Cullin-SOCS-box protein) E3 ubiquitin-protein ligase complex which mediates the ubiquitination and subsequent proteasomal degradation of target proteins. The polypeptide is Ankyrin repeat and SOCS box protein 10 (ASB10) (Homo sapiens (Human)).